The chain runs to 67 residues: Neurotoxin Cex9 (67 aa).

The LCN-type CS-alpha/beta domain occupies 1-65 (KDGYPVEVTG…TWPLPNKSCG (65 aa)). 4 disulfide bridges follow: cysteine 11-cysteine 64, cysteine 15-cysteine 40, cysteine 24-cysteine 45, and cysteine 28-cysteine 47. Cysteine amide is present on cysteine 64. A propeptide spanning residues 65 to 67 (GKK) is cleaved from the precursor.

This sequence belongs to the long (4 C-C) scorpion toxin superfamily. Sodium channel inhibitor family. Beta subfamily. As to expression, expressed by the venom gland.

The protein localises to the secreted. Beta toxins bind voltage-independently at site-4 of sodium channels (Nav) and shift the voltage of activation toward more negative potentials thereby affecting sodium channel activation and promoting spontaneous and repetitive firing. This Centruroides exilicauda (Bark scorpion) protein is Neurotoxin Cex9.